The following is a 252-amino-acid chain: Imidazole glycerol phosphate synthase subunit HisF (252 aa).

Catalysis depends on residues aspartate 11 and aspartate 130.

This sequence belongs to the HisA/HisF family. Heterodimer of HisH and HisF.

The protein localises to the cytoplasm. It catalyses the reaction 5-[(5-phospho-1-deoxy-D-ribulos-1-ylimino)methylamino]-1-(5-phospho-beta-D-ribosyl)imidazole-4-carboxamide + L-glutamine = D-erythro-1-(imidazol-4-yl)glycerol 3-phosphate + 5-amino-1-(5-phospho-beta-D-ribosyl)imidazole-4-carboxamide + L-glutamate + H(+). The protein operates within amino-acid biosynthesis; L-histidine biosynthesis; L-histidine from 5-phospho-alpha-D-ribose 1-diphosphate: step 5/9. Its function is as follows. IGPS catalyzes the conversion of PRFAR and glutamine to IGP, AICAR and glutamate. The HisF subunit catalyzes the cyclization activity that produces IGP and AICAR from PRFAR using the ammonia provided by the HisH subunit. In Polynucleobacter asymbioticus (strain DSM 18221 / CIP 109841 / QLW-P1DMWA-1) (Polynucleobacter necessarius subsp. asymbioticus), this protein is Imidazole glycerol phosphate synthase subunit HisF.